The primary structure comprises 308 residues: Uricase-2 isozyme 1 (308 aa).

Catalysis depends on charge relay system residues K17 and T63. The urate site is built by T63, D64, F165, R182, V237, Q238, and N264. H266 (charge relay system) is an active-site residue. The Microbody targeting signal motif lies at 306–308 (SKL).

This sequence belongs to the uricase family.

It is found in the peroxisome. The enzyme catalyses urate + O2 + H2O = 5-hydroxyisourate + H2O2. The protein operates within purine metabolism; urate degradation; (S)-allantoin from urate: step 1/3. In terms of biological role, catalyzes the oxidation of uric acid to 5-hydroxyisourate, which is further processed to form (S)-allantoin. This is Uricase-2 isozyme 1 from Canavalia lineata (Beach bean).